A 70-amino-acid polypeptide reads, in one-letter code: Large ribosomal subunit protein bL31 (70 aa).

Zn(2+)-binding residues include Cys-16, Cys-18, Cys-37, and Cys-40.

It belongs to the bacterial ribosomal protein bL31 family. Type A subfamily. As to quaternary structure, part of the 50S ribosomal subunit. The cofactor is Zn(2+).

Binds the 23S rRNA. The chain is Large ribosomal subunit protein bL31 from Shewanella sediminis (strain HAW-EB3).